Here is a 119-residue protein sequence, read N- to C-terminus: uncharacterized protein (119 aa).

Residues 1–26 (MNKLKRLSMLTVMIASVFIFSSHALA) form the signal peptide. The SH3b domain occupies 30-104 (YTVSTSSGAP…IVPGFVSDTY (75 aa)).

This sequence to B.subtilis YraJ.

This is an uncharacterized protein from Bacillus subtilis (strain 168).